The following is a 452-amino-acid chain: MSETPAQCSIKQERISYTPPESPVPSYASSTPLHVPVPRALRMEEDSIRLPAHLRLQPIYWSRDDVAQWLKWAENEFSLRPIDSNTFEMNGKALLLLTKEDFRYRSPHSGDVLYELLQHILKQRKPRILFSPFFHPGNSIHTQPEVILHQNHEEDNCVQRTPRPSVDNVHHNPPTIELLHRSRSPITTNHRPSPDPEQRPLRSPLDNMIRRLSPAERAQGPRPHQENNHQESYPLSVSPMENNHCPASSESHPKPSSPRQESTRVIQLMPSPIMHPLILNPRHSVDFKQSRLSEDGLHREGKPINLSHREDLAYMNHIMVSVSPPEEHAMPIGRIADCRLLWDYVYQLLSDSRYENFIRWEDKESKIFRIVDPNGLARLWGNHKNRTNMTYEKMSRALRHYYKLNIIRKEPGQRLLFRFMKTPDEIMSGRTDRLEHLESQELDEQIYQEDEC.

Over residues 1-10 (MSETPAQCSI) the composition is skewed to polar residues. A disordered region spans residues 1–30 (MSETPAQCSIKQERISYTPPESPVPSYASS). Lys11 carries the N6-acetyllysine; alternate modification. Lys11 is covalently cross-linked (Glycyl lysine isopeptide (Lys-Gly) (interchain with G-Cter in SUMO2); alternate). Thr18 is modified (phosphothreonine). Ser22 is subject to Phosphoserine. The 85-residue stretch at 40 to 124 (ALRMEEDSIR…ELLQHILKQR (85 aa)) folds into the PNT domain. Residues 158–262 (VQRTPRPSVD…PKPSSPRQES (105 aa)) are disordered. 2 positions are modified to phosphoserine: Ser213 and Ser238. Residues 230–250 (QESYPLSVSPMENNHCPASSE) are compositionally biased toward polar residues. The residue at position 257 (Ser257) is a Phosphoserine; by MAPK14. Residue Lys288 forms a Glycyl lysine isopeptide (Lys-Gly) (interchain with G-Cter in SUMO2) linkage. Lys302 bears the N6-acetyllysine; alternate mark. Residue Lys302 forms a Glycyl lysine isopeptide (Lys-Gly) (interchain with G-Cter in SUMO2); alternate linkage. Ser323 is modified (phosphoserine). A DNA-binding region (ETS) is located at residues 339-420 (RLLWDYVYQL…PGQRLLFRFM (82 aa)). Glycyl lysine isopeptide (Lys-Gly) (interchain with G-Cter in SUMO2) cross-links involve residues Lys403 and Lys421.

This sequence belongs to the ETS family. In terms of assembly, can form homodimers or heterodimers with TEL2 or FLI1. Interacts with L3MBTL1 and HDAC9. In terms of processing, phosphorylation of Ser-257 by MAPK14 (p38) inhibits ETV6 transcriptional repression. In terms of tissue distribution, ubiquitous.

The protein localises to the nucleus. In terms of biological role, transcriptional repressor; binds to the DNA sequence 5'-CCGGAAGT-3'. Plays a role in hematopoiesis and malignant transformation. The polypeptide is Transcription factor ETV6 (ETV6) (Homo sapiens (Human)).